Here is a 582-residue protein sequence, read N- to C-terminus: Membrane protein insertase YidC (582 aa).

Residues 3–23 (IQRALVITGIAVVSYLMIQAW) traverse the membrane as a helical segment. A disordered region spans residues 38 to 92 (QVAEQGNSSSSDSADLPSVQSQTDNSIPSAQSDNDLPSVSPADIAQPTPSSQRIE). Residues 45 to 58 (SSSSDSADLPSVQS) show a composition bias toward low complexity. A compositionally biased stretch (polar residues) spans 59-74 (QTDNSIPSAQSDNDLP). Transmembrane regions (helical) follow at residues 357–377 (TVDYGWLWFISQPIFALLVFL), 394–414 (GVGNWGVAIILLTLIIKAIFF), 464–484 (LGGCLPMLVQMPVFIALYYVL), 495–515 (FFLWINDLSVMDPYFVLPILM), and 541–561 (MPMIFAVFMLWFPAGLVLYWL).

The protein belongs to the OXA1/ALB3/YidC family. Type 1 subfamily. Interacts with the Sec translocase complex via SecD. Specifically interacts with transmembrane segments of nascent integral membrane proteins during membrane integration.

It is found in the cell inner membrane. Functionally, required for the insertion and/or proper folding and/or complex formation of integral membrane proteins into the membrane. Involved in integration of membrane proteins that insert both dependently and independently of the Sec translocase complex, as well as at least some lipoproteins. Aids folding of multispanning membrane proteins. The polypeptide is Membrane protein insertase YidC (Alcanivorax borkumensis (strain ATCC 700651 / DSM 11573 / NCIMB 13689 / SK2)).